We begin with the raw amino-acid sequence, 202 residues long: MAKVSVLNVAVLENPSPFHSPFRFEISFECSEALSDDLEWKIIYVGSAESEEFDQILDSVLVGPVPAGRHMFVFQADAPNPSLIPETDAVGVTVVLITCTYHGQEFIRVGYYVNNEYPDPELRENPPPKPDFSQLQRNILASNPRVTRFHINWDNNPDSLEAIENQDPNVDFSLSLSCTPVKSLGLPSCIPGLLPENSMDCI.

The segment at 1–156 (MAKVSVLNVA…TRFHINWDNN (156 aa)) is interaction with histone H3 and CHAF1B. Ser198 is subject to Phosphoserine; by TLK2.

It belongs to the ASF1 family. In terms of assembly, interacts with histone H3 (via C-terminus), including histone H3.1, H3.2 and H3.3, and histone H4; the interaction with H3 is direct. Interacts with the CHAF1A, CHAF1B and RBBP4 subunits of the CAF-1 complex. Interacts with HAT1, NASP and TAF1. Found in a soluble complex with NASP and histones H3 and H4; the interaction with NASP is probably indirect and mediated by H3-H4. Interacts with CDAN1. Found in a cytosolic complex with CDAN1, ASF1A, IPO4 and histones H3.1 and H4. Interacts with CREBBP. Post-translationally, phosphorylated by TLK2. Phosphorylated by TLK1. Highly expressed in germ cells. Restricted to premeiotic to meiotic stages during spermatogenesis.

The protein resides in the nucleus. The protein localises to the cytoplasm. Its subcellular location is the cytosol. Functionally, histone chaperone that facilitates histone deposition and histone exchange and removal during nucleosome assembly and disassembly. Cooperates with chromatin assembly factor 1 (CAF-1) to promote replication-dependent chromatin assembly. Also involved in the nuclear import of the histone H3-H4 dimer together with importin-4 (IPO4): specifically recognizes and binds newly synthesized histones with the monomethylation of H3 'Lys-9' (H3K9me1) and diacetylation at 'Lys-5' and 'Lys-12' of H4 (H4K5ac and H4K12ac) marks in the cytosol. Does not participate in replication-independent nucleosome deposition which is mediated by ASF1A and HIRA. Required for gonad development. The chain is Histone chaperone ASF1B from Mus musculus (Mouse).